A 164-amino-acid polypeptide reads, in one-letter code: Xanthine-guanine phosphoribosyltransferase (164 aa).

5-phospho-alpha-D-ribose 1-diphosphate is bound by residues R41–G42 and D98–T106. D99 lines the Mg(2+) pocket. The guanine site is built by D102 and I145. Xanthine-binding residues include D102 and I145. Residues D102–T106 and W144–I145 contribute to the GMP site.

It belongs to the purine/pyrimidine phosphoribosyltransferase family. XGPT subfamily. As to quaternary structure, homotetramer. Mg(2+) serves as cofactor.

It localises to the cell inner membrane. The catalysed reaction is GMP + diphosphate = guanine + 5-phospho-alpha-D-ribose 1-diphosphate. It carries out the reaction XMP + diphosphate = xanthine + 5-phospho-alpha-D-ribose 1-diphosphate. The enzyme catalyses IMP + diphosphate = hypoxanthine + 5-phospho-alpha-D-ribose 1-diphosphate. It participates in purine metabolism; GMP biosynthesis via salvage pathway; GMP from guanine: step 1/1. Its pathway is purine metabolism; XMP biosynthesis via salvage pathway; XMP from xanthine: step 1/1. In terms of biological role, purine salvage pathway enzyme that catalyzes the transfer of the ribosyl-5-phosphate group from 5-phospho-alpha-D-ribose 1-diphosphate (PRPP) to the N9 position of the 6-oxopurines guanine and xanthine to form the corresponding ribonucleotides GMP (guanosine 5'-monophosphate) and XMP (xanthosine 5'-monophosphate), with the release of PPi. To a lesser extent, also acts on hypoxanthine. In Rhizobium johnstonii (strain DSM 114642 / LMG 32736 / 3841) (Rhizobium leguminosarum bv. viciae), this protein is Xanthine-guanine phosphoribosyltransferase.